A 356-amino-acid polypeptide reads, in one-letter code: Histidinol-phosphate aminotransferase (356 aa).

Lys222 is subject to N6-(pyridoxal phosphate)lysine.

The protein belongs to the class-II pyridoxal-phosphate-dependent aminotransferase family. Histidinol-phosphate aminotransferase subfamily. In terms of assembly, homodimer. Pyridoxal 5'-phosphate is required as a cofactor.

The enzyme catalyses L-histidinol phosphate + 2-oxoglutarate = 3-(imidazol-4-yl)-2-oxopropyl phosphate + L-glutamate. It functions in the pathway amino-acid biosynthesis; L-histidine biosynthesis; L-histidine from 5-phospho-alpha-D-ribose 1-diphosphate: step 7/9. In Lactiplantibacillus plantarum (strain ATCC BAA-793 / NCIMB 8826 / WCFS1) (Lactobacillus plantarum), this protein is Histidinol-phosphate aminotransferase.